The chain runs to 454 residues: Signal recognition particle protein (454 aa).

GTP is bound by residues 102 to 109, 184 to 188, and 242 to 245; these read GLQGTGKT, DTAGR, and TKMD.

The protein belongs to the GTP-binding SRP family. SRP54 subfamily. In terms of assembly, part of the signal recognition particle protein translocation system, which is composed of SRP and FtsY.

The protein localises to the cytoplasm. It catalyses the reaction GTP + H2O = GDP + phosphate + H(+). Functionally, involved in targeting and insertion of nascent membrane proteins into the cytoplasmic membrane. Binds to the hydrophobic signal sequence of the ribosome-nascent chain (RNC) as it emerges from the ribosomes. The SRP-RNC complex is then targeted to the cytoplasmic membrane where it interacts with the SRP receptor FtsY. The polypeptide is Signal recognition particle protein (Aquifex aeolicus (strain VF5)).